Here is a 178-residue protein sequence, read N- to C-terminus: Large ribosomal subunit protein uL16 (178 aa).

This sequence belongs to the universal ribosomal protein uL16 family.

The polypeptide is Large ribosomal subunit protein uL16 (Saccharolobus solfataricus (strain ATCC 35092 / DSM 1617 / JCM 11322 / P2) (Sulfolobus solfataricus)).